Reading from the N-terminus, the 1205-residue chain is A disintegrin and metalloproteinase with thrombospondin motifs 3 (1205 aa).

Residues 1–20 (MVLLSLWLIAAALVEVRTSA) form the signal peptide. A propeptide spanning residues 21 to 249 (DGQAGNEEMV…QLNETMRRRR (229 aa)) is cleaved from the precursor. Asn-83, Asn-119, Asn-242, and Asn-345 each carry an N-linked (GlcNAc...) asparagine glycan. The 205-residue stretch at 256 to 460 (YNIEVLLGVD…HSYDCLLDDP (205 aa)) folds into the Peptidase M12B domain. 3 disulfide bridges follow: Cys-333–Cys-382, Cys-376–Cys-455, and Cys-415–Cys-441. His-398 serves as a coordination point for Zn(2+). The active site involves Glu-399. Residues His-402 and His-408 each coordinate Zn(2+). In terms of domain architecture, Disintegrin spans 470–550 (ELPGINYSMD…MWKNANQQKQ (81 aa)). The N-linked (GlcNAc...) asparagine glycan is linked to Asn-475. 7 disulfides stabilise this stretch: Cys-482/Cys-507, Cys-493/Cys-516, Cys-502/Cys-535, Cys-529/Cys-540, Cys-563/Cys-600, Cys-567/Cys-605, and Cys-578/Cys-590. Residues 551-606 (DGNWGSWTKFGSCSRTCGTGVRFRTRQCNNPMPINGGQDCPGVNFEYQLCNTEECQ) form the TSP type-1 1 domain. Residues 713–844 (RTVKGTFTRT…NSNNVIQEEL (132 aa)) form a spacer region. N-linked (GlcNAc...) asparagine glycosylation occurs at Asn-814. TSP type-1 domains lie at 845-905 (DTFE…QECT), 906-965 (HPLW…NRVP), and 966-1014 (CPAQ…QLPP). Residue Asn-942 is glycosylated (N-linked (GlcNAc...) asparagine). Disulfide bonds link Cys-978–Cys-1010, Cys-982–Cys-1015, and Cys-993–Cys-999. The PLAC domain occupies 1015 to 1054 (CNDEPCLGDKSIFCQMEVLARYCSIPGYNKLCCESCSKRS). Residues 1174–1205 (DSIGASSQARTSKKDGKIIDNRRPTRSSTLER) are disordered. Residues 1185–1205 (SKKDGKIIDNRRPTRSSTLER) are compositionally biased toward basic and acidic residues.

The cofactor is Zn(2+). Post-translationally, the precursor is cleaved by a furin endopeptidase. Glycosylated. Can be O-fucosylated by POFUT2 on a serine or a threonine residue found within the consensus sequence C1-X(2)-(S/T)-C2-G of the TSP type-1 repeat domains where C1 and C2 are the first and second cysteine residue of the repeat, respectively. Fucosylated repeats can then be further glycosylated by the addition of a beta-1,3-glucose residue by the glucosyltransferase, B3GALTL. Fucosylation mediates the efficient secretion of ADAMTS family members. Can also be C-glycosylated with one or two mannose molecules on tryptophan residues within the consensus sequence W-X-X-W of the TPRs, and N-glycosylated. These other glycosylations can also facilitate secretion. In terms of tissue distribution, found in cartilage and skin.

Its subcellular location is the secreted. It localises to the extracellular space. The protein resides in the extracellular matrix. Its function is as follows. Cleaves the propeptides of type II collagen prior to fibril assembly. Does not act on types I and III collagens. The protein is A disintegrin and metalloproteinase with thrombospondin motifs 3 (ADAMTS3) of Homo sapiens (Human).